The following is a 214-amino-acid chain: Large ribosomal subunit protein bL25 (214 aa).

The tract at residues 178–214 (VEPEEEELPETDEEGEGAEGEAAEAAEGESAEGESEE) is disordered. Positions 179-214 (EPEEEELPETDEEGEGAEGEAAEAAEGESAEGESEE) are enriched in acidic residues.

The protein belongs to the bacterial ribosomal protein bL25 family. CTC subfamily. Part of the 50S ribosomal subunit; part of the 5S rRNA/L5/L18/L25 subcomplex. Contacts the 5S rRNA. Binds to the 5S rRNA independently of L5 and L18.

Its function is as follows. This is one of the proteins that binds to the 5S RNA in the ribosome where it forms part of the central protuberance. In Corynebacterium jeikeium (strain K411), this protein is Large ribosomal subunit protein bL25.